The sequence spans 196 residues: Heat shock protein beta-8 (196 aa).

A disordered region spans residues 1 to 28; sequence MADGQLPFPCSYPSRLRRDPFRDSPLSS. Phosphoserine occurs at positions 24 and 57. A Phosphothreonine modification is found at Thr63. Asymmetric dimethylarginine occurs at positions 71 and 78. In terms of domain architecture, sHSP spans 78–185; that stretch reads RFGVPAEGRS…PFGESSFNNE (108 aa). The residue at position 87 (Ser87) is a Phosphoserine. The tract at residues 176-196 is disordered; the sequence is PFGESSFNNELPQDNQEVTCS. Residues 178–196 show a composition bias toward polar residues; it reads GESSFNNELPQDNQEVTCS.

Belongs to the small heat shock protein (HSP20) family. Monomer. Forms a ternary complex with BAG3 and HSPA1A. Component of the chaperone-assisted selective autophagy (CASA) complex consisting of BAG3, HSPA8/HSC70, HSPB8 and STUB1/CHIP. Interacts with HSPB1. Interacts with DNAJB6. Interacts with BAG3. Highly expressed in skeletal muscle, heart, uterus, liver, lung and ovary. Low levels found in stomach and brain. Not detected in small intestine, large intestine, kidney, spleen and testis. In the ovary, expression is concentrated in the endometrium and in the connective tissue between the circular and longitudinal muscles of the myometrium.

It is found in the cytoplasm. The protein localises to the nucleus. Functionally, involved in the chaperone-assisted selective autophagy (CASA), a crucial process for protein quality control, particularly in mechanical strained cells and tissues such as muscle. Displays temperature-dependent chaperone activity. In Mus musculus (Mouse), this protein is Heat shock protein beta-8 (Hspb8).